Here is a 235-residue protein sequence, read N- to C-terminus: MAELDAANLMKQAVGKAAADRVKSNTIVGLGTGSTTAYALEFIGDRLKKGELENVVGIPTSFQAEVLARKYGIPLTTLDVADRIDIAIDGADEVDPQKNLIKGGGAAHTREKIVDALAETFLVVVDSGKLVDKLGSTFLLPVEVIPMALTPVMRALAKLGGKPELRMGVKKAGPVVTDQGNLVIDVKFDAITNPAELEKTINNLPGVLENGLFVGVADVILVGEIIDGQPTVREF.

Substrate-binding positions include 32-35 (TGST), 89-92 (DGAD), and 102-105 (KGGG). Glutamate 111 (proton acceptor) is an active-site residue. A substrate-binding site is contributed by lysine 129.

This sequence belongs to the ribose 5-phosphate isomerase family. In terms of assembly, homodimer.

It carries out the reaction aldehydo-D-ribose 5-phosphate = D-ribulose 5-phosphate. Its pathway is carbohydrate degradation; pentose phosphate pathway; D-ribose 5-phosphate from D-ribulose 5-phosphate (non-oxidative stage): step 1/1. Functionally, catalyzes the reversible conversion of ribose-5-phosphate to ribulose 5-phosphate. The polypeptide is Ribose-5-phosphate isomerase A (Synechocystis sp. (strain ATCC 27184 / PCC 6803 / Kazusa)).